The primary structure comprises 307 residues: 2-methoxy-6-polyprenyl-1,4-benzoquinol methylase, mitochondrial (307 aa).

A mitochondrion-targeting transit peptide spans 1–19 (MLISSRIVRSSLVNVPLRL). S-adenosyl-L-methionine-binding positions include Ser122, Asp148, 179-180 (NG), and Ser197.

The protein belongs to the class I-like SAM-binding methyltransferase superfamily. MenG/UbiE family. In terms of assembly, component of a multi-subunit COQ enzyme complex, composed of at least COQ3, COQ4, COQ5, COQ6, COQ7 and COQ9. Interacts with COQ3.

It is found in the mitochondrion inner membrane. It carries out the reaction 2-methoxy-6-(all-trans-hexaprenyl)benzene-1,4-diol + S-adenosyl-L-methionine = 5-methoxy-2-methyl-3-(all-trans-hexaprenyl)benzene-1,4-diol + S-adenosyl-L-homocysteine + H(+). Its pathway is cofactor biosynthesis; ubiquinone biosynthesis. Methyltransferase required for the conversion of 2-hexaprenyl-6-methoxy-1,4-benzoquinol (DDMQH2) to 2-hexaprenyl-3-methyl-6-methoxy-1,4-benzoquinol (DMQH2). This chain is 2-methoxy-6-polyprenyl-1,4-benzoquinol methylase, mitochondrial, found in Saccharomyces cerevisiae (strain ATCC 204508 / S288c) (Baker's yeast).